The chain runs to 236 residues: DNA repair protein RecO (236 aa).

This sequence belongs to the RecO family.

Its function is as follows. Involved in DNA repair and RecF pathway recombination. In Stutzerimonas stutzeri (strain A1501) (Pseudomonas stutzeri), this protein is DNA repair protein RecO.